The chain runs to 224 residues: Lipoprotein-releasing system ATP-binding protein LolD (224 aa).

Residues 6–224 enclose the ABC transporter domain; it reads VRLRELRRSF…VVRLHEGVLE (219 aa). 42–49 is a binding site for ATP; the sequence is GPSGSGKS.

The protein belongs to the ABC transporter superfamily. Lipoprotein translocase (TC 3.A.1.125) family. As to quaternary structure, the complex is composed of two ATP-binding proteins (LolD) and two transmembrane proteins (LolC and LolE).

Its subcellular location is the cell inner membrane. Functionally, part of the ABC transporter complex LolCDE involved in the translocation of mature outer membrane-directed lipoproteins, from the inner membrane to the periplasmic chaperone, LolA. Responsible for the formation of the LolA-lipoprotein complex in an ATP-dependent manner. The chain is Lipoprotein-releasing system ATP-binding protein LolD from Novosphingobium aromaticivorans (strain ATCC 700278 / DSM 12444 / CCUG 56034 / CIP 105152 / NBRC 16084 / F199).